We begin with the raw amino-acid sequence, 373 residues long: Putative F-box/kelch-repeat protein At5g24040 (373 aa).

In terms of domain architecture, F-box spans 2–50 (VKWSELPPEILHLISLKIDNPFDLIHFRSVCSFWRSSSLLKFRHMTSLR). Kelch repeat units lie at residues 165 to 207 (NEYM…PFKG) and 262 to 308 (YDFH…CTFS).

The chain is Putative F-box/kelch-repeat protein At5g24040 from Arabidopsis thaliana (Mouse-ear cress).